A 264-amino-acid chain; its full sequence is Glucosamine-6-phosphate deaminase (264 aa).

Aspartate 72 functions as the Proton acceptor; for enolization step in the catalytic mechanism. Aspartate 141 serves as the catalytic For ring-opening step. Histidine 143 serves as the catalytic Proton acceptor; for ring-opening step. Glutamate 148 functions as the For ring-opening step in the catalytic mechanism.

This sequence belongs to the glucosamine/galactosamine-6-phosphate isomerase family. NagB subfamily. As to quaternary structure, homohexamer.

It carries out the reaction alpha-D-glucosamine 6-phosphate + H2O = beta-D-fructose 6-phosphate + NH4(+). It participates in amino-sugar metabolism; N-acetylneuraminate degradation; D-fructose 6-phosphate from N-acetylneuraminate: step 5/5. With respect to regulation, allosterically activated by N-acetylglucosamine 6-phosphate (GlcNAc6P). Catalyzes the reversible isomerization-deamination of glucosamine 6-phosphate (GlcN6P) to form fructose 6-phosphate (Fru6P) and ammonium ion. In Glaesserella parasuis serovar 5 (strain SH0165) (Haemophilus parasuis), this protein is Glucosamine-6-phosphate deaminase.